A 264-amino-acid chain; its full sequence is Apolipoprotein A-I (264 aa).

The first 18 residues, 1–18 (MKAVVLAVAVLFLTGSQA), serve as a signal peptide directing secretion. Repeat copies occupy residues 67 to 88 (LKLV…EQLG) and 89 to 110 (PVTQ…EEMN). Positions 67-264 (LKLVDNWDTV…DETSKRLSTQ (198 aa)) are 10 X approximate tandem repeats. Met-109 carries the methionine sulfoxide modification. Residues 111–121 (KDLEEVKKQVQ) form a 3; half-length repeat. 3 tandem repeats follow at residues 122–143 (PYLD…QKVG), 144–165 (PLGA…ERLV), and 166–187 (PVGE…SNLS). The 7; truncated repeat unit spans residues 188–207 (PYSDKMRERLAQHLAKLKDS). At Met-193 the chain carries Methionine sulfoxide. Copy 8 of the repeat occupies 208 to 229 (TTLAEYRTKASNHLQTLSEKAK). A 9; half-length repeat occupies 230 to 240 (PALEDLRQGLT). The stretch at 241–264 (PMLESFRATIMGWIDETSKRLSTQ) is repeat 10. Residue Met-242 is modified to Methionine sulfoxide.

It belongs to the apolipoprotein A1/A4/E family. In terms of assembly, homodimer. Interacts with APOA1BP and CLU. Component of a sperm activating protein complex (SPAP), consisting of APOA1, an immunoglobulin heavy chain, an immunoglobulin light chain and albumin. Interacts with NDRG1. Interacts with SCGB3A2. Interacts with NAXE and YJEFN3. In terms of processing, glycosylated. Post-translationally, palmitoylated. Phosphorylation sites are present in the extracellular medium.

The protein resides in the secreted. In terms of biological role, participates in the reverse transport of cholesterol from tissues to the liver for excretion by promoting cholesterol efflux from tissues and by acting as a cofactor for the lecithin cholesterol acyltransferase (LCAT). As part of the SPAP complex, activates spermatozoa motility. This Peromyscus maniculatus bairdii (Prairie deer mouse) protein is Apolipoprotein A-I (Apoa1).